The following is a 322-amino-acid chain: Agmatinase (322 aa).

6 residues coordinate Mn(2+): His136, Asp160, His162, Asp164, Asp243, and Asp245.

It belongs to the arginase family. Agmatinase subfamily. Mn(2+) is required as a cofactor.

It catalyses the reaction agmatine + H2O = urea + putrescine. It functions in the pathway amine and polyamine biosynthesis; putrescine biosynthesis via agmatine pathway; putrescine from agmatine: step 1/1. Functionally, catalyzes the formation of putrescine from agmatine. This is Agmatinase from Chromobacterium violaceum (strain ATCC 12472 / DSM 30191 / JCM 1249 / CCUG 213 / NBRC 12614 / NCIMB 9131 / NCTC 9757 / MK).